We begin with the raw amino-acid sequence, 1119 residues long: DNA-directed RNA polymerase subunit beta (1119 aa).

The protein belongs to the RNA polymerase beta chain family. In terms of assembly, the RNAP catalytic core consists of 2 alpha, 1 beta, 1 beta' and 1 omega subunit. When a sigma factor is associated with the core the holoenzyme is formed, which can initiate transcription.

The enzyme catalyses RNA(n) + a ribonucleoside 5'-triphosphate = RNA(n+1) + diphosphate. In terms of biological role, DNA-dependent RNA polymerase catalyzes the transcription of DNA into RNA using the four ribonucleoside triphosphates as substrates. The protein is DNA-directed RNA polymerase subunit beta of Thermus thermophilus (strain ATCC BAA-163 / DSM 7039 / HB27).